Reading from the N-terminus, the 652-residue chain is DNA ligase (652 aa).

NAD(+) is bound by residues 29–33 (DSEYD), 78–79 (SL), and E107. K109 serves as the catalytic N6-AMP-lysine intermediate. NAD(+) contacts are provided by R130, E164, K278, and K302. The Zn(2+) site is built by C395, C398, C413, and C418. Residues 577–652 (VADAALSGLT…VRDEAWLESL (76 aa)) form the BRCT domain.

It belongs to the NAD-dependent DNA ligase family. LigA subfamily. It depends on Mg(2+) as a cofactor. Requires Mn(2+) as cofactor.

It carries out the reaction NAD(+) + (deoxyribonucleotide)n-3'-hydroxyl + 5'-phospho-(deoxyribonucleotide)m = (deoxyribonucleotide)n+m + AMP + beta-nicotinamide D-nucleotide.. Its function is as follows. DNA ligase that catalyzes the formation of phosphodiester linkages between 5'-phosphoryl and 3'-hydroxyl groups in double-stranded DNA using NAD as a coenzyme and as the energy source for the reaction. It is essential for DNA replication and repair of damaged DNA. The protein is DNA ligase of Streptococcus pneumoniae (strain Hungary19A-6).